Here is a 322-residue protein sequence, read N- to C-terminus: Beta-ketoacyl-[acyl-carrier-protein] synthase III (322 aa).

Active-site residues include cysteine 113 and histidine 247. The tract at residues 248–252 is ACP-binding; sequence QANIR. Asparagine 278 is a catalytic residue.

Belongs to the thiolase-like superfamily. FabH family. In terms of assembly, homodimer.

It localises to the cytoplasm. It carries out the reaction malonyl-[ACP] + acetyl-CoA + H(+) = 3-oxobutanoyl-[ACP] + CO2 + CoA. It functions in the pathway lipid metabolism; fatty acid biosynthesis. Its function is as follows. Catalyzes the condensation reaction of fatty acid synthesis by the addition to an acyl acceptor of two carbons from malonyl-ACP. Catalyzes the first condensation reaction which initiates fatty acid synthesis and may therefore play a role in governing the total rate of fatty acid production. Possesses both acetoacetyl-ACP synthase and acetyl transacylase activities. Its substrate specificity determines the biosynthesis of branched-chain and/or straight-chain of fatty acids. This is Beta-ketoacyl-[acyl-carrier-protein] synthase III from Tropheryma whipplei (strain TW08/27) (Whipple's bacillus).